Here is a 665-residue protein sequence, read N- to C-terminus: Fructose-1,6-bisphosphatase class 3 (665 aa).

The protein belongs to the FBPase class 3 family. It depends on Mn(2+) as a cofactor.

The enzyme catalyses beta-D-fructose 1,6-bisphosphate + H2O = beta-D-fructose 6-phosphate + phosphate. It functions in the pathway carbohydrate biosynthesis; gluconeogenesis. The polypeptide is Fructose-1,6-bisphosphatase class 3 (Clostridium novyi (strain NT)).